Reading from the N-terminus, the 610-residue chain is Butyryl-CoA dehydrogenase Swol_1933 (610 aa).

The active-site Proton acceptor is the Glu451.

The protein belongs to the acyl-CoA dehydrogenase family. It depends on FAD as a cofactor.

It localises to the cytoplasm. The enzyme catalyses butanoyl-CoA + oxidized [electron-transfer flavoprotein] + H(+) = (2E)-butenoyl-CoA + reduced [electron-transfer flavoprotein]. It carries out the reaction a short-chain 2,3-saturated fatty acyl-CoA + oxidized [electron-transfer flavoprotein] + H(+) = a short-chain (2E)-enoyl-CoA + reduced [electron-transfer flavoprotein]. It functions in the pathway lipid metabolism; butanoate metabolism. In terms of biological role, involved in syntrophic growth of S.wolfei with butyrate, as part of the butyrate oxidation pathway. Catalyzes the oxidation of butanoyl-CoA to crotonyl-CoA. Probably passes the electrons released by this reaction on to electron-transfer flavoproteins (EtfAB) to finally generate hydrogen and/or formate. The chain is Butyryl-CoA dehydrogenase Swol_1933 from Syntrophomonas wolfei subsp. wolfei (strain DSM 2245B / Goettingen).